A 150-amino-acid polypeptide reads, in one-letter code: Ribonuclease pancreatic (150 aa).

The N-terminal stretch at methionine 1–glycine 26 is a signal peptide. Lysine 27 and lysine 33 each carry an N-linked (Glc) (glycation) lysine; in vitro glycan. Residues lysine 33 and arginine 36 each contribute to the substrate site. The active-site Proton acceptor is the histidine 38. Cystine bridges form between cysteine 52-cysteine 110, cysteine 66-cysteine 121, cysteine 84-cysteine 136, and cysteine 91-cysteine 98. A glycan (N-linked (GlcNAc...) asparagine; partial) is linked at asparagine 60. Residues lysine 63 and lysine 67 are each glycosylated (N-linked (Glc) (glycation) lysine; in vitro). Residues lysine 67 to threonine 71, lysine 92, and arginine 111 contribute to the substrate site. Residue histidine 145 is the Proton donor of the active site.

The protein belongs to the pancreatic ribonuclease family. As to quaternary structure, interacts with and forms tight 1:1 complexes with RNH1. Dimerization of two such complexes may occur. Interaction with RNH1 inhibits this protein. Monomer. Pancreas.

The protein localises to the secreted. The enzyme catalyses an [RNA] containing cytidine + H2O = an [RNA]-3'-cytidine-3'-phosphate + a 5'-hydroxy-ribonucleotide-3'-[RNA].. It catalyses the reaction an [RNA] containing uridine + H2O = an [RNA]-3'-uridine-3'-phosphate + a 5'-hydroxy-ribonucleotide-3'-[RNA].. Its function is as follows. Endonuclease that catalyzes the cleavage of RNA on the 3' side of pyrimidine nucleotides. Acts on single-stranded and double-stranded RNA. In Bos taurus (Bovine), this protein is Ribonuclease pancreatic (RNASE1).